Reading from the N-terminus, the 212-residue chain is External core antigen (212 aa).

The first 19 residues, 1–19 (MQLFHLCLIISCSCPTVQA), serve as a signal peptide directing secretion. Positions 25–27 (GWL) are HBEAG. Residues 172–212 (LPETTVVRRRGRSPRRRTPSPRRRRSQSPRRRRSQSRESQC) are disordered. A compositionally biased stretch (basic residues) spans 178–205 (VRRRGRSPRRRTPSPRRRRSQSPRRRRS). The stretch at 184 to 190 (SPRRRTP) is one 1; half-length repeat. The segment at 184–206 (SPRRRTPSPRRRRSQSPRRRRSQ) is 3 X 8 AA repeats of S-P-R-R-R-R-S-Q. A propeptide spanning residues 184 to 212 (SPRRRTPSPRRRRSQSPRRRRSQSRESQC) is cleaved from the precursor. 2 consecutive repeat copies span residues 191 to 198 (SPRRRRSQ) and 199 to 206 (SPRRRRSQ).

It belongs to the orthohepadnavirus precore antigen family. As to quaternary structure, homodimerizes. Phosphorylated. Post-translationally, cleaved by host furin.

The protein resides in the secreted. It is found in the host nucleus. May regulate immune response to the intracellular capsid in acting as a T-cell tolerogen, by having an immunoregulatory effect which prevents destruction of infected cells by cytotoxic T-cells. This immune regulation may predispose to chronicity during perinatal infections and prevent severe liver injury during adult infections. The polypeptide is External core antigen (Hepatitis B virus genotype D (isolate Germany/1-91/1991) (HBV-D)).